The primary structure comprises 1136 residues: Probable LRR receptor-like serine/threonine-protein kinase At4g36180 (1136 aa).

The first 22 residues, 1–22, serve as a signal peptide directing secretion; it reads MAMDISLFFIFLVIYAPLVSYA. The Extracellular portion of the chain corresponds to 23 to 751; sequence DESQAEIDAL…TAEGKKKKRK (729 aa). 8 LRR repeats span residues 93-115, 117-139, 141-162, 163-186, 187-210, 211-233, 235-256, and 259-280; these read MLRK…LAYC, RLLS…MRNL, SLEV…GLPS, SLQF…ANLT, QLQL…GNLQ, SLQY…ISNC, SLVH…AYGA, and KLEV…SLFC. N-linked (GlcNAc...) asparagine glycans are attached at residues N105 and N138. N-linked (GlcNAc...) asparagine glycans are attached at residues N184, N192, and N232. N-linked (GlcNAc...) asparagine glycosylation is found at N269 and N281. LRR repeat units lie at residues 283–304, 309–330, 333–355, 357–379, 381–403, 405–426, 429–452, 453–479, 480–500, 501–524, 525–546, 549–571, 573–595, 597–620, 621–643, 645–666, 669–691, and 694–716; these read SLTI…ETTA, GLQV…WLTN, SLKN…IGNL, RLEE…IKQC, SLDV…LGYM, ALKV…SMVN, QLER…MALT, SLSE…SNLS, FLNL…GNLF, KLTA…SGLP, NVQV…GFSS, SLRY…FGFL, LLVS…IGNC, ALEV…SRLP, RLKV…ISQS, SLNS…SFSG, NLTK…LALI, and NLVY…LGSR. N-linked (GlcNAc...) asparagine glycosylation is present at N365. N-linked (GlcNAc...) asparagine glycans are attached at residues N441, N474, N477, N482, N511, N535, N554, and N594. An N-linked (GlcNAc...) asparagine glycan is attached at N631. 4 N-linked (GlcNAc...) asparagine glycosylation sites follow: N669, N679, N699, and N719. A helical transmembrane segment spans residues 752–772; sequence MILMIVMAAIGAFLLSLFCCF. Over 773 to 1136 the chain is Cytoplasmic; it reads YVYTLLKWRK…ADPTSQPSPA (364 aa). Residues 786–819 are disordered; it reads QQSTTGEKKRSPGRTSAGSRVRSSTSRSSTENGE. Residues 799–815 show a composition bias toward low complexity; sequence RTSAGSRVRSSTSRSST. Phosphothreonine occurs at positions 830 and 838. Positions 841–1123 constitute a Protein kinase domain; the sequence is FDEENVLSRT…LEGCRVGPDV (283 aa). Phosphotyrosine occurs at positions 915 and 1010.

The protein belongs to the protein kinase superfamily. Ser/Thr protein kinase family.

The protein localises to the cell membrane. The enzyme catalyses L-seryl-[protein] + ATP = O-phospho-L-seryl-[protein] + ADP + H(+). It catalyses the reaction L-threonyl-[protein] + ATP = O-phospho-L-threonyl-[protein] + ADP + H(+). The protein is Probable LRR receptor-like serine/threonine-protein kinase At4g36180 of Arabidopsis thaliana (Mouse-ear cress).